The chain runs to 233 residues: Demethylmenaquinone methyltransferase (233 aa).

S-adenosyl-L-methionine is bound by residues Thr-60, Asp-81, and 106–107 (DA).

This sequence belongs to the class I-like SAM-binding methyltransferase superfamily. MenG/UbiE family.

It carries out the reaction a 2-demethylmenaquinol + S-adenosyl-L-methionine = a menaquinol + S-adenosyl-L-homocysteine + H(+). It participates in quinol/quinone metabolism; menaquinone biosynthesis; menaquinol from 1,4-dihydroxy-2-naphthoate: step 2/2. Methyltransferase required for the conversion of demethylmenaquinol (DMKH2) to menaquinol (MKH2). The protein is Demethylmenaquinone methyltransferase of Staphylococcus saprophyticus subsp. saprophyticus (strain ATCC 15305 / DSM 20229 / NCIMB 8711 / NCTC 7292 / S-41).